We begin with the raw amino-acid sequence, 113 residues long: HIG1 domain-containing protein C25B8.07c, mitochondrial (113 aa).

Residues Met-1–Arg-27 are disordered. In terms of domain architecture, HIG1 spans Asn-12–Ser-103. The next 2 helical transmembrane spans lie at Pro-39–Ile-59 and Val-75–Pro-95.

It localises to the mitochondrion membrane. The sequence is that of HIG1 domain-containing protein C25B8.07c, mitochondrial from Schizosaccharomyces pombe (strain 972 / ATCC 24843) (Fission yeast).